Consider the following 219-residue polypeptide: ATP-dependent Clp protease proteolytic subunit 1, mitochondrial (219 aa).

The N-terminal 23 residues, 1 to 23, are a transit peptide targeting the mitochondrion; sequence MLRRILTTSSVRNLTSSTQARVG. The active-site Nucleophile is S118. H143 is a catalytic residue.

The protein belongs to the peptidase S14 family. In terms of assembly, tetradecamer that assembles into a two heptameric rings with a central cavity.

Its subcellular location is the mitochondrion matrix. It catalyses the reaction Hydrolysis of proteins to small peptides in the presence of ATP and magnesium. alpha-casein is the usual test substrate. In the absence of ATP, only oligopeptides shorter than five residues are hydrolyzed (such as succinyl-Leu-Tyr-|-NHMec, and Leu-Tyr-Leu-|-Tyr-Trp, in which cleavage of the -Tyr-|-Leu- and -Tyr-|-Trp bonds also occurs).. Functionally, clp cleaves peptides in various proteins in a process that requires ATP hydrolysis. Clp may be responsible for a fairly general and central housekeeping function rather than for the degradation of specific substrates. The sequence is that of ATP-dependent Clp protease proteolytic subunit 1, mitochondrial from Caenorhabditis briggsae.